A 70-amino-acid polypeptide reads, in one-letter code: Disintegrin triflavin (70 aa).

The 70-residue stretch at Gly-1–Leu-70 folds into the Disintegrin domain. 6 disulfide bridges follow: Cys-4/Cys-19, Cys-6/Cys-14, Cys-13/Cys-36, Cys-27/Cys-33, Cys-32/Cys-57, and Cys-45/Cys-64. The Cell attachment site signature appears at Arg-49–Asp-51.

This sequence belongs to the venom metalloproteinase (M12B) family. P-II subfamily. P-IIa sub-subfamily. In terms of assembly, monomer. As to expression, expressed by the venom gland.

Its subcellular location is the secreted. In terms of biological role, inhibits fibrinogen interaction with platelets. Acts by binding to alpha-IIb/beta-3 (ITGA2B/ITGB3) on the platelet surface and inhibits aggregation induced by ADP, thrombin, platelet-activating factor and collagen. The chain is Disintegrin triflavin from Protobothrops flavoviridis (Habu).